Consider the following 922-residue polypeptide: NEDD4-like E3 ubiquitin-protein ligase WWP1 (922 aa).

A C2 domain is found at 1–116; the sequence is MATASPRSDT…IHNRKLERVK (116 aa). Polar residues-rich tracts occupy residues 210–219, 243–278, 286–302, 314–323, and 340–351; these read GDNTPSSPSQ, NGESSSFAPTDNASVTGTPVVSEENALSPNCTSTTV, ILTSSENNECIPSTSAE, DTSNSRSSSA, and RQQSGNANTETL. Residues 210–388 are disordered; it reads GDNTPSSPSQ…RPQPLPPGWE (179 aa). WW domains are found at residues 349–382, 381–414, 456–489, and 496–529; these read ETLPSGWEQRKDPHGRTYYVDHNTRTTTWERPQP, QPLPPGWERRVDDRRRVYYVDHNTRTTTWQRPTM, GPLPPGWEKRVDSTDRVYFVNHNTKTTQWEDPRT, and EPLPEGWEIRYTREGVRYFVDHNTRTTTFKDPRN. A required for interaction with and ubiquitination of AMOTL2. Required for interaction with YAP1 region spans residues 349–531; the sequence is ETLPSGWEQR…TTFKDPRNGK (183 aa). Positions 588–922 constitute an HECT domain; sequence KPYDLRRRLY…IEETEGFGQE (335 aa). Catalysis depends on Cys-890, which acts as the Glycyl thioester intermediate.

Interacts with the Crumbs complex components PALS1 and PATJ; interaction with the Crumbs complex is enhanced by WWP1's interaction with AMOTL2 and facilitates WWP1 localization to the plasma membrane. Interaction with the Crumbs complex promotes WWP1 monoubiquitination of AMOTL2, which activates the Hippo signaling pathway. Binds KLF2 and HIVEP3. Binds SCNN1A, SCNN1B, SCNN1G, WBP1, WBP2, DRPLA and adenovirus type 2 PIII. Interacts with RNF11. Interacts with SPART. Interacts with ERBB4 isoforms JM-B CYT-1 and JM-A CYT-1. Interacts with SMAD1, SMAD2, SMAD3, SMAD5, SMAD6, SMAD7, TGFBR1 and TGFBR2. Associates with the TGFBR1:TGFBR2 receptor complex in presence of SMAD7. Interacts with SKIL isoform 1. Interacts with TP63 isoform 1 and isoform 2. Interacts with STAMBP and RNF11. Interacts with NDFIP1 and NDFIP2; this interaction activates the E3 ubiquitin-protein ligase. Interacts with TGIF. Interacts (via WW domains) with ARRDC1, ARRDC2 and ARRDC3. In terms of assembly, (Microbial infection) Interacts with HTLV-1 protein Gag. As to quaternary structure, (Microbial infection) Interacts with ebola virus protein VP40. Post-translationally, auto-ubiquitinated and ubiquitinated by RNF11. As to expression, detected in heart, placenta, pancreas, kidney, liver, skeletal muscle, bone marrow, fetal brain, and at much lower levels in adult brain and lung. Isoform 1 and isoform 5 predominate in all tissues tested, except in testis and bone marrow, where isoform 5 is expressed at much higher levels than isoform 1.

The protein localises to the cytoplasm. It localises to the cell membrane. Its subcellular location is the nucleus. It is found in the cell junction. The catalysed reaction is S-ubiquitinyl-[E2 ubiquitin-conjugating enzyme]-L-cysteine + [acceptor protein]-L-lysine = [E2 ubiquitin-conjugating enzyme]-L-cysteine + N(6)-ubiquitinyl-[acceptor protein]-L-lysine.. It functions in the pathway protein modification; protein ubiquitination. With respect to regulation, activated by NDFIP1- and NDFIP2-binding. E3 ubiquitin-protein ligase which accepts ubiquitin from an E2 ubiquitin-conjugating enzyme in the form of a thioester and then directly transfers the ubiquitin to targeted substrates. Ubiquitinates ERBB4 isoforms JM-A CYT-1 and JM-B CYT-1, KLF2, KLF5 and TP63 and promotes their proteasomal degradation. Ubiquitinates RNF11 without targeting it for degradation. Ubiquitinates and promotes degradation of TGFBR1; the ubiquitination is enhanced by SMAD7. Ubiquitinates SMAD6 and SMAD7. Ubiquitinates and promotes degradation of SMAD2 in response to TGF-beta signaling, which requires interaction with TGIF. Activates the Hippo signaling pathway in response to cell contact inhibition and recruitment to the Crumbs complex at the cell membrane. Monoubiquitinates AMOTL2 which facilitates its interaction with and activation of LATS2. LATS2 then phosphorylates YAP1, excluding it from the nucleus and therefore ultimately represses YAP1-driven transcription of target genes. This Homo sapiens (Human) protein is NEDD4-like E3 ubiquitin-protein ligase WWP1 (WWP1).